The following is a 396-amino-acid chain: MIISAASDYRAAAQRILPPFLFHYMDGGAYSEYTLRRNVEDLSEVALRQRILKNMSDLSLETTLFNEKLSMPVALGPVGLCGMYARRGEVQAAKAADAHGIPFTLSTVSVCPIEEVAPAIKRPMWFQLYVLRDRGFMRNALERAKAAGCSTLVFTVDMPTPGARYRDAHSGMSGPNAAMRRYLQAVTHPQWAWDVGLNGRPHDLGNISAYLGKPTGLEDYIGWLGNNFDPSISWKDLEWIRDFWDGPMVIKGILDPEDARDAVRFGADGIVVSNHGGRQLDGVLSSARALPAIADAVKGDIAILADSGIRNGLDVVRMIALGADTVLLGRAFLYALATAGQAGVANLLNLIEKEMKVAMTLTGAKSISEITQDSLVQGLGKELPAALAPMAKGNAA.

The 380-residue stretch at 1–380 folds into the FMN hydroxy acid dehydrogenase domain; it reads MIISAASDYR…TQDSLVQGLG (380 aa). Y24 lines the substrate pocket. FMN-binding residues include S106 and Q127. Y129 serves as a coordination point for substrate. T155 serves as a coordination point for FMN. Position 164 (R164) interacts with substrate. Position 251 (K251) interacts with FMN. Catalysis depends on H275, which acts as the Proton acceptor. Residue R278 participates in substrate binding. Position 306-330 (306-330) interacts with FMN; that stretch reads DSGIRNGLDVVRMIALGADTVLLGR.

This sequence belongs to the FMN-dependent alpha-hydroxy acid dehydrogenase family. The cofactor is FMN.

It is found in the cell inner membrane. It carries out the reaction (S)-lactate + A = pyruvate + AH2. Catalyzes the conversion of L-lactate to pyruvate. Is coupled to the respiratory chain. The chain is L-lactate dehydrogenase from Escherichia coli O7:K1 (strain IAI39 / ExPEC).